Here is a 131-residue protein sequence, read N- to C-terminus: Profilin-2 (131 aa).

This sequence belongs to the profilin family. In terms of assembly, occurs in many kinds of cells as a complex with monomeric actin in a 1:1 ratio.

It is found in the cytoplasm. Its subcellular location is the cytoskeleton. Its function is as follows. Binds to actin and affects the structure of the cytoskeleton. At high concentrations, profilin prevents the polymerization of actin, whereas it enhances it at low concentrations. By binding to PIP2, it inhibits the formation of IP3 and DG. This Triticum aestivum (Wheat) protein is Profilin-2 (PRO2).